Consider the following 687-residue polypeptide: Protein-glutamine gamma-glutamyltransferase 2 (687 aa).

An N-acetylalanine modification is found at Ala2. The residue at position 60 (Ser60) is a Phosphoserine. Intrachain disulfides connect Cys230–Cys370 and Cys370–Cys371. Catalysis depends on residues Cys277, His335, and Asp358. Ca(2+) contacts are provided by Asn398, Asp400, Glu437, Glu447, and Glu452. Lys468 bears the N6-acetyllysine mark. Residue 476 to 483 (RIRVGQSM) coordinates GTP. Glu539 is a Ca(2+) binding site. 580 to 583 (RDLY) provides a ligand contact to GTP. Gln633 participates in a covalent cross-link: Isoglutamyl lysine isopeptide (Gln-Lys) (interchain with K-?).

Belongs to the transglutaminase superfamily. Transglutaminase family. In terms of assembly, monomer. Interacts with phospholipase C; promoting alpha-1 adrenergic receptor signaling. Interacts with PLCD1. As to quaternary structure, homooligomer. Ca(2+) serves as cofactor. Disulfide bond formation inactivates the calcium-dependent acyltransferase activity. Cys-370 can form disulfide bonds with both Cys-230 and Cys-371: formation of a disulfide bond between Cys-230 and Cys-370 facilitates formation of the disulfide between Cys-370 and Cys-371, which promotes inactivation of the acyltransferase activity. May also form interchain disulfids between Cys-230 and Cys-370. Ca(2+) protects against disulfide bond formation and inactivation. Post-translationally, auto-transglutaminated: Forms covalent cross-links mediated by transglutaminase between Gln-633 and the epsilon-amino group of a lysine residue of itself or HMGB1, forming homopolymers and heteropolymers, respectively. In terms of processing, S-nitrosylated, leading to inactivation of the acyltransferase activity.

The protein resides in the cytoplasm. The protein localises to the cytosol. It localises to the nucleus. Its subcellular location is the chromosome. It is found in the secreted. The protein resides in the extracellular space. The protein localises to the extracellular matrix. It localises to the cell membrane. Its subcellular location is the mitochondrion. It is found in the perinuclear region. The enzyme catalyses L-glutaminyl-[protein] + L-lysyl-[protein] = [protein]-L-lysyl-N(6)-5-L-glutamyl-[protein] + NH4(+). It carries out the reaction L-glutaminyl-[protein] + serotonin = 5-serotonyl-L-glutamyl-[protein] + NH4(+). It catalyses the reaction L-glutaminyl-[protein] + dopamine = 5-dopaminyl-L-glutamyl-[protein] + NH4(+). The catalysed reaction is L-glutaminyl-[protein] + histamine = 5-histaminyl-L-glutamyl-[protein] + NH4(+). The enzyme catalyses L-glutaminyl-[protein] + (R)-noradrenaline = 5-(R)-noradrenalinyl-L-glutamyl-[protein] + NH4(+). It carries out the reaction L-glutaminyl-[protein] + H2O = L-glutamyl-[protein] + NH4(+). Its activity is regulated as follows. Acyltransferase activity is regulated by the binding of GTP and Ca(2+): inactivated by GTP, which stabilizes its closed structure, thereby obstructing the accessibility of substrates to the active sites. In contrast, Ca(2+) acts as a cofactor by inducing conformational change to the active open form. In absence of Ca(2+), Mg(2+) may bind Ca(2+)-binding sites, promoting GTP-binding and subsequent inhibition of the acyltransferase activity. Extracellularly reduced and activated by CLIC3. Specifically inhibited by compound VA4 ((S)-Benzyl (6-Acrylamido-1-(4-((5-(dimethylamino)naphthalen-1-yl)sulfonyl)piperazin-1-yl)-1-oxohexan-2-yl)carbamate), which specifically abolishes both the transamidation and GTP-binding activities. Calcium-dependent acyltransferase that catalyzes the formation of covalent bonds between peptide-bound glutamine and various primary amines, such as gamma-amino group of peptide-bound lysine, or mono- and polyamines, thereby producing cross-linked or aminated proteins, respectively. Involved in many biological processes, such as bone development, angiogenesis, wound healing, cellular differentiation, chromatin modification and apoptosis. Acts as a protein-glutamine gamma-glutamyltransferase by mediating the cross-linking of proteins, such as ACO2, HSPB6, FN1, HMGB1, RAP1GDS1, SLC25A4/ANT1, SPP1 and WDR54. Under physiological conditions, the protein cross-linking activity is inhibited by GTP; inhibition is relieved by Ca(2+) in response to various stresses. When secreted, catalyzes cross-linking of proteins of the extracellular matrix, such as FN1 and SPP1 resulting in the formation of scaffolds. Plays a key role during apoptosis, both by (1) promoting the cross-linking of cytoskeletal proteins resulting in condensation of the cytoplasm, and by (2) mediating cross-linking proteins of the extracellular matrix, resulting in the irreversible formation of scaffolds that stabilize the integrity of the dying cells before their clearance by phagocytosis, thereby preventing the leakage of harmful intracellular components. In addition to protein cross-linking, can use different monoamine substrates to catalyze a vast array of protein post-translational modifications: mediates aminylation of serotonin, dopamine, noradrenaline or histamine into glutamine residues of target proteins to generate protein serotonylation, dopaminylation, noradrenalinylation or histaminylation, respectively. Mediates protein serotonylation of small GTPases during activation and aggregation of platelets, leading to constitutive activation of these GTPases. Plays a key role in chromatin organization by mediating serotonylation and dopaminylation of histone H3. Catalyzes serotonylation of 'Gln-5' of histone H3 (H3Q5ser) during serotonergic neuron differentiation, thereby facilitating transcription. Acts as a mediator of neurotransmission-independent role of nuclear dopamine in ventral tegmental area (VTA) neurons: catalyzes dopaminylation of 'Gln-5' of histone H3 (H3Q5dop), thereby regulating relapse-related transcriptional plasticity in the reward system. Regulates vein remodeling by mediating serotonylation and subsequent inactivation of ATP2A2/SERCA2. Also acts as a protein deamidase by mediating the side chain deamidation of specific glutamine residues of proteins to glutamate. Catalyzes specific deamidation of protein gliadin, a component of wheat gluten in the diet. May also act as an isopeptidase cleaving the previously formed cross-links. Also able to participate in signaling pathways independently of its acyltransferase activity: acts as a signal transducer in alpha-1 adrenergic receptor-mediated stimulation of phospholipase C-delta (PLCD) activity and is required for coupling alpha-1 adrenergic agonists to the stimulation of phosphoinositide lipid metabolism. In terms of biological role, has cytotoxic activity: is able to induce apoptosis independently of its acyltransferase activity. The sequence is that of Protein-glutamine gamma-glutamyltransferase 2 from Homo sapiens (Human).